The following is a 159-amino-acid chain: Phosphoribosylaminoimidazole carboxylase (159 aa).

Substrate-binding residues include serine 11, aspartate 14, serine 38, lysine 41, glycine 67, and serine 69.

It catalyses the reaction 5-amino-1-(5-phospho-D-ribosyl)imidazole-4-carboxylate + H(+) = 5-amino-1-(5-phospho-beta-D-ribosyl)imidazole + CO2. Its pathway is purine metabolism; IMP biosynthesis via de novo pathway; 5-amino-1-(5-phospho-D-ribosyl)imidazole-4-carboxylate from 5-amino-1-(5-phospho-D-ribosyl)imidazole (carboxylase route): step 1/1. Functionally, catalyzes the reversible conversion of 5-aminoimidazole ribonucleotide (AIR) and CO(2) to 4-carboxy-5-aminoimidazole ribonucleotide (CAIR). Does not accept N5-carboxyaminoimidazole ribonucleotide (N5-CAIR) as a substrate. In Treponema denticola (strain ATCC 35405 / DSM 14222 / CIP 103919 / JCM 8153 / KCTC 15104), this protein is Phosphoribosylaminoimidazole carboxylase.